Reading from the N-terminus, the 421-residue chain is N-succinylarginine dihydrolase (421 aa).

Substrate is bound by residues 19 to 28 (AGLSLGNLAS), Asn105, and 132 to 133 (HR). Glu167 is a catalytic residue. Residue Arg199 participates in substrate binding. His235 is a catalytic residue. Residues Asp237 and Asn346 each coordinate substrate. Cys352 functions as the Nucleophile in the catalytic mechanism.

The protein belongs to the succinylarginine dihydrolase family. Homodimer.

The enzyme catalyses N(2)-succinyl-L-arginine + 2 H2O + 2 H(+) = N(2)-succinyl-L-ornithine + 2 NH4(+) + CO2. The protein operates within amino-acid degradation; L-arginine degradation via AST pathway; L-glutamate and succinate from L-arginine: step 2/5. Its function is as follows. Catalyzes the hydrolysis of N(2)-succinylarginine into N(2)-succinylornithine, ammonia and CO(2). This Novosphingobium aromaticivorans (strain ATCC 700278 / DSM 12444 / CCUG 56034 / CIP 105152 / NBRC 16084 / F199) protein is N-succinylarginine dihydrolase.